A 1040-amino-acid polypeptide reads, in one-letter code: Multidrug resistance protein MdtB (1040 aa).

The next 12 membrane-spanning stretches (helical) occupy residues 16–36 (FIMR…AGII), 347–367 (LMMA…NIPA), 369–389 (IIPG…MVFL), 396–416 (LTLM…IVVI), 440–460 (IGFT…PLLF), 472–492 (FAIT…TLTP), 537–557 (WLTL…WVFI), 863–883 (LGST…VLGI), 888–908 (FIHP…ALLA), 911–931 (IAGS…IGIV), 968–988 (ILMT…STGV), and 998–1018 (IGMV…TPVI).

This sequence belongs to the resistance-nodulation-cell division (RND) (TC 2.A.6) family. MdtB subfamily. As to quaternary structure, part of a tripartite efflux system composed of MdtA, MdtB and MdtC. MdtB forms a heteromultimer with MdtC.

The protein localises to the cell inner membrane. This chain is Multidrug resistance protein MdtB, found in Shigella boydii serotype 4 (strain Sb227).